The sequence spans 122 residues: Basic phospholipase A2 vipoxin B chain (122 aa).

Cystine bridges form between cysteine 26–cysteine 115, cysteine 28–cysteine 44, cysteine 43–cysteine 95, cysteine 49–cysteine 122, cysteine 50–cysteine 88, cysteine 57–cysteine 81, and cysteine 75–cysteine 86. Ca(2+) contacts are provided by tyrosine 27, glycine 29, and glycine 31. Histidine 47 is a catalytic residue. Aspartate 48 is a binding site for Ca(2+). Residue aspartate 89 is part of the active site.

It belongs to the phospholipase A2 family. Group II subfamily. D49 sub-subfamily. In terms of assembly, heterodimer of A (AC P04084) and B chains; non-covalently linked. The A chain (acidic) is non-toxic, and increases the toxicity of the B chain (basic). The A chain may act as factor stabilizing the complex structure and hence retaining its toxicity by preventing non-specific binding. Upon binding to the target membranes the A chain is postulated to dissociate. Ca(2+) serves as cofactor. Expressed by the venom gland.

It localises to the secreted. It catalyses the reaction a 1,2-diacyl-sn-glycero-3-phosphocholine + H2O = a 1-acyl-sn-glycero-3-phosphocholine + a fatty acid + H(+). Its function is as follows. Heterodimer: postsynaptic neurotoxin. In terms of biological role, monomer: snake venom phospholipase A2 (PLA2) that shows hemolytic activity and inhibition of platelet aggregation. The hemolytic activity occurs only in presence of fatty acids (unsaturated fatty acids facilitate induce a strong hemolytic activity, whereas saturated fatty acids induce a slight activity). The inhibition of platelet aggregation is almost maximal when aggregation is induced by collagen, and arachidonic acid, whereas it is only of 30% when the aggregation is induced by ADP. PLA2 catalyzes the calcium-dependent hydrolysis of the 2-acyl groups in 3-sn-phosphoglycerides. The polypeptide is Basic phospholipase A2 vipoxin B chain (Vipera ammodytes meridionalis (Eastern sand viper)).